The following is a 239-amino-acid chain: Phosphoribosylaminoimidazole-succinocarboxamide synthase (239 aa).

It belongs to the SAICAR synthetase family.

The enzyme catalyses 5-amino-1-(5-phospho-D-ribosyl)imidazole-4-carboxylate + L-aspartate + ATP = (2S)-2-[5-amino-1-(5-phospho-beta-D-ribosyl)imidazole-4-carboxamido]succinate + ADP + phosphate + 2 H(+). It functions in the pathway purine metabolism; IMP biosynthesis via de novo pathway; 5-amino-1-(5-phospho-D-ribosyl)imidazole-4-carboxamide from 5-amino-1-(5-phospho-D-ribosyl)imidazole-4-carboxylate: step 1/2. This Bacillus thuringiensis subsp. konkukian (strain 97-27) protein is Phosphoribosylaminoimidazole-succinocarboxamide synthase.